The primary structure comprises 61 residues: Photosystem II reaction center protein K (61 aa).

Residues M1 to G24 constitute a propeptide that is removed on maturation. The chain crosses the membrane as a helical span at residues M40 to F60.

Belongs to the PsbK family. In terms of assembly, PSII is composed of 1 copy each of membrane proteins PsbA, PsbB, PsbC, PsbD, PsbE, PsbF, PsbH, PsbI, PsbJ, PsbK, PsbL, PsbM, PsbT, PsbX, PsbY, PsbZ, Psb30/Ycf12, at least 3 peripheral proteins of the oxygen-evolving complex and a large number of cofactors. It forms dimeric complexes.

The protein resides in the plastid. It is found in the chloroplast thylakoid membrane. Functionally, one of the components of the core complex of photosystem II (PSII). PSII is a light-driven water:plastoquinone oxidoreductase that uses light energy to abstract electrons from H(2)O, generating O(2) and a proton gradient subsequently used for ATP formation. It consists of a core antenna complex that captures photons, and an electron transfer chain that converts photonic excitation into a charge separation. This Pelargonium hortorum (Common geranium) protein is Photosystem II reaction center protein K.